The sequence spans 453 residues: tRNA modification GTPase MnmE (453 aa).

R22, E79, and K119 together coordinate (6S)-5-formyl-5,6,7,8-tetrahydrofolate. The 162-residue stretch at 215–376 (GMKVVIAGRP…LKLHLKSLMG (162 aa)) folds into the TrmE-type G domain. N225 provides a ligand contact to K(+). GTP is bound by residues 225-230 (NAGKSS), 244-250 (TEIAGTT), 269-272 (DTAG), and 334-337 (NKAD). S229 provides a ligand contact to Mg(2+). Residues T244, I246, and T249 each coordinate K(+). T250 is a binding site for Mg(2+). Position 453 (K453) interacts with (6S)-5-formyl-5,6,7,8-tetrahydrofolate.

The protein belongs to the TRAFAC class TrmE-Era-EngA-EngB-Septin-like GTPase superfamily. TrmE GTPase family. In terms of assembly, homodimer. Heterotetramer of two MnmE and two MnmG subunits. K(+) is required as a cofactor.

The protein localises to the cytoplasm. Exhibits a very high intrinsic GTPase hydrolysis rate. Involved in the addition of a carboxymethylaminomethyl (cmnm) group at the wobble position (U34) of certain tRNAs, forming tRNA-cmnm(5)s(2)U34. The protein is tRNA modification GTPase MnmE of Shewanella sp. (strain W3-18-1).